The primary structure comprises 250 residues: mRNA-decapping protein g5R (250 aa).

Residues 97 to 239 (QKFRKNWLLP…NLEPMIGPAF (143 aa)) enclose the Nudix hydrolase domain. Residues 132–153 (GKPKEDESDLTCAIREFEEETG) carry the Nudix box motif. Glu138 is a binding site for Mg(2+). Residue Glu147 is the Nucleophile of the active site. Mg(2+) contacts are provided by Glu151 and Asp173.

This sequence belongs to the Nudix hydrolase family. DIPP subfamily. In terms of assembly, interacts with host RPL23A. Mg(2+) is required as a cofactor. The cofactor is Mn(2+).

Its subcellular location is the host rough endoplasmic reticulum. It catalyses the reaction diphospho-myo-inositol polyphosphate + H2O = myo-inositol polyphosphate + phosphate.. Its function is as follows. Decapping enzyme required for the removal of the 5'-end m7GpppN cap tethered to viral and host mRNAs to allow their decay in cells. May therefore accelerate viral and cellular mRNA turnover to eliminate competing host mRNAs and allow stage-specific synthesis of viral proteins. Acceleration of the turnover of cellular transcripts may even promote the shutoff of host protein synthesis. In addition to the mRNA cap, g5R also efficiently hydrolyzes diphosphoinositol polyphosphates. Down-regulation of the level of PP-InsP5 (diphosphoinositol pentakisphosphate) may play a role in viral manipulation of the cellular secretory pathway, a step necessary for the formation of virions. Binds viral and cellular poly(A) mRNAs, thereby decreasing both types of mRNAs. The sequence is that of mRNA-decapping protein g5R from Ornithodoros (relapsing fever ticks).